Here is a 289-residue protein sequence, read N- to C-terminus: Diacylglycerol pyrophosphate phosphatase 1 (289 aa).

Over 1–21 the chain is Vacuolar; it reads MNRVSFIKTPFNIGAKWRLED. A helical transmembrane segment spans residues 22-42; sequence VFLLIIMILLNYPVYYQQPFE. At 43–65 the chain is on the cytoplasmic side; it reads RQFYINDLTISHPYATTERVNNN. Residues 66-86 traverse the membrane as a helical segment; sequence MLFVYSFVVPSLTILIIGSIL. Over 87 to 92 the chain is Vacuolar; sequence ADRRHL. Residues 93-113 form a helical membrane-spanning segment; it reads IFILYTSLLGLSLAWFSTSFF. Residues 114–172 lie on the Cytoplasmic side of the membrane; it reads TNFIKNWIGRLRPDFLDRCQPVEGLPLDTLFTAKDVCTTKNHERLLDGFRTTPSGHSSE. Residues 118-126 form a phosphatase sequence motif I region; it reads KNWIGRLRP. A phosphatase sequence motif II region spans residues 166–169; the sequence is PSGH. The next 2 helical transmembrane spans lie at 173–193 and 194–214; these read SFAG…TESP and LMPL…ALIA. Over 215–222 the chain is Cytoplasmic; the sequence is LSRTQDYR. A phosphatase sequence motif III region spans residues 216–227; it reads SRTQDYRHHFVD. The helical transmembrane segment at 223–243 threads the bilayer; sequence HHFVDVILGSMLGYIMAHFFY. The Vacuolar portion of the chain corresponds to 244-289; the sequence is RRIFPPIDDPLPFKPLMDDSDVTLEEAVTHQRIPDEELHPLSDEGM. S285 carries the phosphoserine modification.

Belongs to the PA-phosphatase related phosphoesterase family.

The protein resides in the vacuole membrane. The enzyme catalyses a 1,2-diacyl-sn-glycerol 3-diphosphate + H2O = a 1,2-diacyl-sn-glycero-3-phosphate + phosphate + H(+). It carries out the reaction a 1,2-diacyl-sn-glycero-3-phosphate + H2O = a 1,2-diacyl-sn-glycerol + phosphate. The catalysed reaction is a 1-acyl-sn-glycero-3-phosphate + H2O = a 1-acyl-sn-glycerol + phosphate. Its activity is regulated as follows. Inhibited by sodium fluoride (NaF) and pyrophosphate. Strongly inhibited by manganese ion and, to a lower extent, by magnesium and calcium ions. Also inhibited by Cu(2+) ion. In an indirect manner, it is also inhibited by the zinc ion which is able to form a complex with DGPP and prevent the enzyme from removing the phosphate from the substrate. Not inhibited by N-ethylmaleimide. Catalyzes the dephosphorylation of diacylglycerol diphosphate (DGPP) to phosphatidate (PA) and the subsequent dephosphorylation of PA to diacylglycerol (DAG). Together with LPP1, regulates intracellular DGPP and PA levels, which are phospholipid molecules believed to play a signaling role in stress response. Can also use lysophosphatidic acid (LPA) and phosphatidylglycerophosphate as substrates. Substrate preference is DGPP &gt; LPA &gt; PA. Activity is independent of a divalent cation ion and insensitive to inhibition by N-ethylmaleimide. This Saccharomyces cerevisiae (strain ATCC 204508 / S288c) (Baker's yeast) protein is Diacylglycerol pyrophosphate phosphatase 1 (DPP1).